The following is a 504-amino-acid chain: Arabinose import ATP-binding protein AraG (504 aa).

ABC transporter domains follow at residues 8–243 (LSFR…MVGR) and 256–499 (YGEE…MPKV). 40–47 (GENGAGKS) provides a ligand contact to ATP.

This sequence belongs to the ABC transporter superfamily. Arabinose importer (TC 3.A.1.2.2) family. The complex is composed of two ATP-binding proteins (AraG), two transmembrane proteins (AraH) and a solute-binding protein (AraF).

It localises to the cell inner membrane. It carries out the reaction L-arabinose(out) + ATP + H2O = L-arabinose(in) + ADP + phosphate + H(+). Functionally, part of the ABC transporter complex AraFGH involved in arabinose import. Responsible for energy coupling to the transport system. The sequence is that of Arabinose import ATP-binding protein AraG from Shigella sonnei (strain Ss046).